The primary structure comprises 171 residues: Peptide methionine sulfoxide reductase MsrA (171 aa).

Cys-13 is an active-site residue.

The protein belongs to the MsrA Met sulfoxide reductase family.

The catalysed reaction is L-methionyl-[protein] + [thioredoxin]-disulfide + H2O = L-methionyl-(S)-S-oxide-[protein] + [thioredoxin]-dithiol. It carries out the reaction [thioredoxin]-disulfide + L-methionine + H2O = L-methionine (S)-S-oxide + [thioredoxin]-dithiol. In terms of biological role, has an important function as a repair enzyme for proteins that have been inactivated by oxidation. Catalyzes the reversible oxidation-reduction of methionine sulfoxide in proteins to methionine. This Mycobacterium sp. (strain JLS) protein is Peptide methionine sulfoxide reductase MsrA.